Consider the following 417-residue polypeptide: WD repeat and FYVE domain-containing protein 2 (417 aa).

WD repeat units lie at residues 29-68 (GHVA…QFWP), 119-157 (CHAG…NKVG), 202-241 (AHTN…GEAY), and 245-284 (GHNG…VETP). The FYVE-type zinc finger occupies 286–357 (WKTSDCCQKC…ICNDCAGRMK (72 aa)). 8 residues coordinate Zn(2+): C292, C295, C319, C322, C327, C330, C349, and C352. A WD 5 repeat occupies 373 to 412 (EIRTGITAMHLQETLGLLVTSGQNRVVMIWDVRSVCSAPS).

Plays a role in coelomocyte endocytosis. The chain is WD repeat and FYVE domain-containing protein 2 from Caenorhabditis briggsae.